Reading from the N-terminus, the 339-residue chain is DNA-directed RNA polymerase subunit alpha (339 aa).

The alpha N-terminal domain (alpha-NTD) stretch occupies residues 1 to 238 (MVDPIVTKNW…EQLSIFINFD (238 aa)). Residues 250–339 (VEEQKLNENL…KAAPQGAPKV (90 aa)) are alpha C-terminal domain (alpha-CTD).

It belongs to the RNA polymerase alpha chain family. In terms of assembly, homodimer. The RNAP catalytic core consists of 2 alpha, 1 beta, 1 beta' and 1 omega subunit. When a sigma factor is associated with the core the holoenzyme is formed, which can initiate transcription.

It carries out the reaction RNA(n) + a ribonucleoside 5'-triphosphate = RNA(n+1) + diphosphate. Functionally, DNA-dependent RNA polymerase catalyzes the transcription of DNA into RNA using the four ribonucleoside triphosphates as substrates. The polypeptide is DNA-directed RNA polymerase subunit alpha (Anaeromyxobacter dehalogenans (strain 2CP-C)).